Reading from the N-terminus, the 388-residue chain is Succinate--CoA ligase [ADP-forming] subunit beta (388 aa).

The 236-residue stretch at K9–H244 folds into the ATP-grasp domain. ATP is bound by residues K46, G53–G55, E99, S102, and E107. Mg(2+) is bound by residues N199 and D213. Residues N264 and G321–V323 contribute to the substrate site.

This sequence belongs to the succinate/malate CoA ligase beta subunit family. Heterotetramer of two alpha and two beta subunits. Requires Mg(2+) as cofactor.

It carries out the reaction succinate + ATP + CoA = succinyl-CoA + ADP + phosphate. It catalyses the reaction GTP + succinate + CoA = succinyl-CoA + GDP + phosphate. The protein operates within carbohydrate metabolism; tricarboxylic acid cycle; succinate from succinyl-CoA (ligase route): step 1/1. In terms of biological role, succinyl-CoA synthetase functions in the citric acid cycle (TCA), coupling the hydrolysis of succinyl-CoA to the synthesis of either ATP or GTP and thus represents the only step of substrate-level phosphorylation in the TCA. The beta subunit provides nucleotide specificity of the enzyme and binds the substrate succinate, while the binding sites for coenzyme A and phosphate are found in the alpha subunit. In Vibrio campbellii (strain ATCC BAA-1116), this protein is Succinate--CoA ligase [ADP-forming] subunit beta.